We begin with the raw amino-acid sequence, 106 residues long: Large ribosomal subunit protein uL24 (106 aa).

This sequence belongs to the universal ribosomal protein uL24 family. In terms of assembly, part of the 50S ribosomal subunit.

Functionally, one of two assembly initiator proteins, it binds directly to the 5'-end of the 23S rRNA, where it nucleates assembly of the 50S subunit. In terms of biological role, one of the proteins that surrounds the polypeptide exit tunnel on the outside of the subunit. This chain is Large ribosomal subunit protein uL24, found in Marinobacter nauticus (strain ATCC 700491 / DSM 11845 / VT8) (Marinobacter aquaeolei).